Reading from the N-terminus, the 267-residue chain is Cell division protein FtsQ (267 aa).

Over 1–32 (MRKKTSSNKKKQTKKTNNISLRRKLGLMYKKA) the chain is Cytoplasmic. The helical transmembrane segment at 33–53 (ILGLKIALIIFVCLFVFTKYF) threads the bilayer. The Periplasmic portion of the chain corresponds to 54-267 (AGIKTYLTTN…DKNKYYIEKY (214 aa)). Residues 73 to 141 (FKLENVIIEG…NTVYIKLFER (69 aa)) form the POTRA domain.

It belongs to the FtsQ/DivIB family. FtsQ subfamily.

It is found in the cell inner membrane. Its function is as follows. Essential cell division protein. In Rickettsia conorii (strain ATCC VR-613 / Malish 7), this protein is Cell division protein FtsQ.